Consider the following 509-residue polypeptide: Maturase K (509 aa).

Belongs to the intron maturase 2 family. MatK subfamily.

The protein resides in the plastid. Its subcellular location is the chloroplast. Functionally, usually encoded in the trnK tRNA gene intron. Probably assists in splicing its own and other chloroplast group II introns. In Nicotiana acuminata (Acuminate tobacco), this protein is Maturase K.